A 2568-amino-acid polypeptide reads, in one-letter code: Highly reducing polyketide synthase AN6791 (2568 aa).

Positions 11–445 (AEPIAIVGLS…GTNAHLIVES (435 aa)) constitute a Ketosynthase family 3 (KS3) domain. Active-site for beta-ketoacyl synthase activity residues include Cys200, His326, and His366. One can recognise a Malonyl-CoA:ACP transacylase (MAT) domain in the interval 558 to 882 (VFTGQGAQWY…GSLVREVSAV (325 aa)). Residues 949–1087 (HDLLGSLVLG…GLITMEPEDA (139 aa)) form an N-terminal hotdog fold region. Residues 949–1258 (HDLLGSLVLG…FQSVGRSAAP (310 aa)) enclose the PKS/mFAS DH domain. The active-site Proton acceptor; for dehydratase activity is the His981. A C-terminal hotdog fold region spans residues 1104–1258 (TRRFGPSDLY…FQSVGRSAAP (155 aa)). Asp1169 serves as the catalytic Proton donor; for dehydratase activity. The segment at 1311 to 1620 (RACLYFIYDA…EVRDCESDEW (310 aa)) is methyltransferase (CMet) domain. The region spanning 1857-2174 (GLLDTIAFDD…VGKHSGKVVL (318 aa)) is the Enoyl reductase (ER) domain. Positions 2197 to 2375 (ASYLLVGGAG…AVSMDLGPVK (179 aa)) constitute a Ketoreductase (KR) domain. The Carrier domain maps to 2481–2558 (QAEKLVVEAI…ALASEVTRKS (78 aa)). Ser2518 is subject to O-(pantetheine 4'-phosphoryl)serine.

Pantetheine 4'-phosphate serves as cofactor.

It participates in secondary metabolite biosynthesis. Functionally, highly reducing polyketide synthase; part of a cluster that mediates the biosynthesis of a yet undetermined secondary metabolite. With esterase AN6793, produces a pathway intermediate compound with molecular weight 258. This chain is Highly reducing polyketide synthase AN6791, found in Emericella nidulans (strain FGSC A4 / ATCC 38163 / CBS 112.46 / NRRL 194 / M139) (Aspergillus nidulans).